Consider the following 668-residue polypeptide: MKHYSIQPANLEFNAEGTPVSRDFDDVYFSNDNGLEETRYVFLGGNQLEVRFPEHPHPLFVVAESGFGTGLNFLTLWQAFDQFREAHPQAQLQRLHFISFEKFPLTRADLALAHQHWPELAPWAEQLQAQWPMPLPGCHRLLLDEGRVTLDLWFGDINELTSQLDDSLNQKVDAWFLDGFAPAKNPDMWTQNLFNAMARLARPGGTLATFTSAGFVRRGLQDAGFTMQKRKGFGRKREMLCGVMEQTLPLPCSAPWFNRTGSSKREAAIIGGGIASALLSLALLRRGWQVTLYCADEAPALGASGNRQGALYPLLSKHDEALNRFFSNAFTFARRFYDQLPVKFDHDWCGVTQLGWDEKSQHKIAQMLSMDLPAELAVAVEANAVEQITGVATNCSGITYPQGGWLCPAELTRNVLELAQQQGLQIYYQYQLQNLSRKDDCWLLNFAGDQQATHSVVVLANGHQISRFSQTSTLPVYSVAGQVSHIPTTPELAELKQVLCYDGYLTPQNPANQHHCIGASYHRGSEDTAYSEDDQQQNRQRLIDCFPQAQWAKEVDVSDKEARCGVRCATRDHLPMVGNVPDYEATLVEYASLAEQKDEAVSAPVFDDLFMFAALGSRGLCSAPLCAEILAAQMSDEPIPMDASTLAALNPNRLWVRKLLKGKAVKAG.

Positions 1-245 (MKHYSIQPAN…KREMLCGVME (245 aa)) are tRNA (mnm(5)s(2)U34)-methyltransferase. Residues 270-668 (IGGGIASALL…LLKGKAVKAG (399 aa)) are FAD-dependent cmnm(5)s(2)U34 oxidoreductase.

This sequence in the N-terminal section; belongs to the methyltransferase superfamily. tRNA (mnm(5)s(2)U34)-methyltransferase family. It in the C-terminal section; belongs to the DAO family. It depends on FAD as a cofactor.

It is found in the cytoplasm. The catalysed reaction is 5-aminomethyl-2-thiouridine(34) in tRNA + S-adenosyl-L-methionine = 5-methylaminomethyl-2-thiouridine(34) in tRNA + S-adenosyl-L-homocysteine + H(+). Its function is as follows. Catalyzes the last two steps in the biosynthesis of 5-methylaminomethyl-2-thiouridine (mnm(5)s(2)U) at the wobble position (U34) in tRNA. Catalyzes the FAD-dependent demodification of cmnm(5)s(2)U34 to nm(5)s(2)U34, followed by the transfer of a methyl group from S-adenosyl-L-methionine to nm(5)s(2)U34, to form mnm(5)s(2)U34. This chain is tRNA 5-methylaminomethyl-2-thiouridine biosynthesis bifunctional protein MnmC, found in Escherichia coli (strain K12 / DH10B).